The primary structure comprises 198 residues: Probable thymidylate kinase (198 aa).

Gly7–Ser14 provides a ligand contact to ATP.

It belongs to the thymidylate kinase family.

It catalyses the reaction dTMP + ATP = dTDP + ADP. This is Probable thymidylate kinase from Methanocorpusculum labreanum (strain ATCC 43576 / DSM 4855 / Z).